We begin with the raw amino-acid sequence, 527 residues long: Homeobox protein NOBOX (527 aa).

Disordered regions lie at residues 1–126, 194–245, 271–306, and 488–527; these read MEPT…DLKK, VEKL…DVFP, VTPP…RDVP, and ETGS…GAKE. The homeobox DNA-binding region spans 136 to 195; that stretch reads RKKTRTLYRSDQLEELERIFQEDHYPDSDKRHEISQMVGVTPQRIMVWFQNRRAKWRKVE. Over residues 194–203 the composition is skewed to basic and acidic residues; sequence VEKLNEKETK. A compositionally biased stretch (polar residues) spans 488 to 506; that stretch reads ETGSSLSKMSDEQTSSSLE. Positions 511–527 are enriched in basic and acidic residues; it reads EEVRDKNKNSHAAGAKE.

Specifically expressed in ovaries and testes. In ovaries, expressed in oocytes from primordial through antral follicles but not in granulosa cells, theca cells and corpora lutea.

The protein localises to the nucleus. Transcription factor which plays an essential role in postnatal follicle development. Binds preferentially to the DNA sequences 5'-TAATTG-3', 5'-TAGTTG-3' and 5'-TAATTA-3'. Directly regulates the transcription of POU5F1 and GDF9 during early folliculogenesis. The chain is Homeobox protein NOBOX (Nobox) from Mus musculus (Mouse).